Consider the following 201-residue polypeptide: MNAVPHLGVLALQGAFREHRQRLEALGVRVTEVRRPGDLAGLQGLILPGGESTTIARLMTDFGLWQPVRDFHAAGGALWGTCAGAILLAREVLGGPPQFGGHQASLALMDLSVRRNAFGRQVDSFRVPLAVRGLAAPFPAVFIRAPVIERVGEGVDVLARHQGQIVLARQGRLLASAFHPELTPDPRLHALFLEMSLTVSA.

50–52 (GES) serves as a coordination point for L-glutamine. The active-site Nucleophile is C82. L-glutamine contacts are provided by residues R115 and 143–144 (IR). Catalysis depends on charge relay system residues H179 and E181.

The protein belongs to the glutaminase PdxT/SNO family. In the presence of PdxS, forms a dodecamer of heterodimers. Only shows activity in the heterodimer.

It carries out the reaction aldehydo-D-ribose 5-phosphate + D-glyceraldehyde 3-phosphate + L-glutamine = pyridoxal 5'-phosphate + L-glutamate + phosphate + 3 H2O + H(+). It catalyses the reaction L-glutamine + H2O = L-glutamate + NH4(+). It participates in cofactor biosynthesis; pyridoxal 5'-phosphate biosynthesis. Functionally, catalyzes the hydrolysis of glutamine to glutamate and ammonia as part of the biosynthesis of pyridoxal 5'-phosphate. The resulting ammonia molecule is channeled to the active site of PdxS. In Deinococcus geothermalis (strain DSM 11300 / CIP 105573 / AG-3a), this protein is Pyridoxal 5'-phosphate synthase subunit PdxT.